Reading from the N-terminus, the 300-residue chain is Probable protein phosphatase 2C 2 (300 aa).

Positions 23-298 (IFAASEMQGW…DNMTTILVYL (276 aa)) constitute a PPM-type phosphatase domain. Mn(2+) is bound by residues Asp-57, Gly-58, Asp-237, and Asp-289.

It belongs to the PP2C family. The cofactor is Mg(2+). Mn(2+) is required as a cofactor.

It localises to the membrane. It catalyses the reaction O-phospho-L-seryl-[protein] + H2O = L-seryl-[protein] + phosphate. The catalysed reaction is O-phospho-L-threonyl-[protein] + H2O = L-threonyl-[protein] + phosphate. Functionally, enzyme with a broad specificity. This Paramecium tetraurelia protein is Probable protein phosphatase 2C 2.